Consider the following 262-residue polypeptide: Polyamine aminopropyltransferase (262 aa).

One can recognise a PABS domain in the interval 1 to 249 (MWITQEITPY…DIHRAAFALP (249 aa)). Asn29 contributes to the S-methyl-5'-thioadenosine binding site. A spermidine-binding site is contributed by Asp83. The Proton acceptor role is filled by Asp155.

It belongs to the spermidine/spermine synthase family. In terms of assembly, homodimer or homotetramer.

The protein localises to the cytoplasm. It catalyses the reaction S-adenosyl 3-(methylsulfanyl)propylamine + putrescine = S-methyl-5'-thioadenosine + spermidine + H(+). Its pathway is amine and polyamine biosynthesis; spermidine biosynthesis; spermidine from putrescine: step 1/1. In terms of biological role, catalyzes the irreversible transfer of a propylamine group from the amino donor S-adenosylmethioninamine (decarboxy-AdoMet) to putrescine (1,4-diaminobutane) to yield spermidine. This Helicobacter pylori (strain P12) protein is Polyamine aminopropyltransferase.